The following is a 198-amino-acid chain: T-cell surface glycoprotein CD3 epsilon chain (198 aa).

The N-terminal stretch at 1–21 (MRAGTLWRVLALWLLSVAAWG) is a signal peptide. The Extracellular portion of the chain corresponds to 22–120 (QEDDDHADDY…EACMEVDLTT (99 aa)). The Ig-like domain occupies 28–106 (ADDYTQKLFT…KENEHILYLK (79 aa)). Cys-49 and Cys-90 are disulfide-bonded. A helical transmembrane segment spans residues 121 to 141 (VASIVVADVCVTLGLLLLVYY). At 142-198 (WSKNRKAKCKPVTRGAGAGGRPRGQNKERPPPVPNPDYEPIRKGQRDLYSGLNQRGI) the chain is on the cytoplasmic side. Residues 153-198 (VTRGAGAGGRPRGQNKERPPPVPNPDYEPIRKGQRDLYSGLNQRGI) form a disordered region. An NUMB-binding region region spans residues 166-183 (QNKERPPPVPNPDYEPIR). Residues 169–196 (ERPPPVPNPDYEPIRKGQRDLYSGLNQR) enclose the ITAM domain. The tract at residues 170–177 (RPPPVPNP) is proline-rich sequence. 2 positions are modified to phosphotyrosine: Tyr-179 and Tyr-190.

In terms of assembly, the TCR-CD3 complex is composed of a CD3D/CD3E and a CD3G/CD3E heterodimers that preferentially associate with TCRalpha and TCRbeta, respectively, to form TCRalpha/CD3E/CD3G and TCRbeta/CD3G/CD3E trimers. In turn, the hexamer interacts with CD3Z homodimer to form the TCR-CD3 complex. Alternatively, TCRalpha and TCRbeta can be replaced by TCRgamma and TCRdelta. Interacts with CD6. Interacts (via Proline-rich sequence) with NCK1; the interaction is ligand dependent but independent of tyrosine kinase activation. Post-translationally, phosphorylated on Tyr residues after T-cell receptor triggering by LCK in association with CD4/CD8.

Its subcellular location is the cell membrane. In terms of biological role, part of the TCR-CD3 complex present on T-lymphocyte cell surface that plays an essential role in adaptive immune response. When antigen presenting cells (APCs) activate T-cell receptor (TCR), TCR-mediated signals are transmitted across the cell membrane by the CD3 chains CD3D, CD3E, CD3G and CD3Z. All CD3 chains contain immunoreceptor tyrosine-based activation motifs (ITAMs) in their cytoplasmic domain. Upon TCR engagement, these motifs become phosphorylated by Src family protein tyrosine kinases LCK and FYN, resulting in the activation of downstream signaling pathways. In addition of this role of signal transduction in T-cell activation, CD3E plays an essential role in correct T-cell development. Also participates in internalization and cell surface down-regulation of TCR-CD3 complexes via endocytosis sequences present in CD3E cytosolic region. In addition to its role as a TCR coreceptor, it serves as a receptor for ITPRIPL1. Ligand recognition inhibits T-cell activation by promoting interaction with NCK1, which prevents CD3E-ZAP70 interaction and blocks the ERK-NFkB signaling cascade and calcium influx. The chain is T-cell surface glycoprotein CD3 epsilon chain (CD3E) from Oryctolagus cuniculus (Rabbit).